A 198-amino-acid polypeptide reads, in one-letter code: PEP-dependent dihydroxyacetone kinase 1, ADP-binding subunit DhaL (198 aa).

The 189-residue stretch at 6–194 (DWALRWLNDF…SALLFHAMLQ (189 aa)) folds into the DhaL domain. 3 residues coordinate Mg(2+): aspartate 30, aspartate 35, and aspartate 37. ADP contacts are provided by residues 38 to 41 (HGIN), 79 to 80 (AS), glycine 120, methionine 129, arginine 166, and 179 to 181 (DPG).

As to quaternary structure, homodimer. The dihydroxyacetone kinase complex is composed of a homodimer of DhaM, a homodimer of DhaK and the subunit DhaL. Mg(2+) serves as cofactor.

The protein localises to the cytoplasm. The enzyme catalyses dihydroxyacetone + phosphoenolpyruvate = dihydroxyacetone phosphate + pyruvate. Its pathway is polyol metabolism; glycerol degradation. In terms of biological role, ADP-binding subunit of the dihydroxyacetone kinase, which is responsible for the phosphoenolpyruvate (PEP)-dependent phosphorylation of dihydroxyacetone. DhaL-ADP is converted to DhaL-ATP via a phosphoryl group transfer from DhaM and transmits it to dihydroxyacetone binds to DhaK. In Listeria innocua serovar 6a (strain ATCC BAA-680 / CLIP 11262), this protein is PEP-dependent dihydroxyacetone kinase 1, ADP-binding subunit DhaL.